The sequence spans 272 residues: MSEPNLNPAYTLDQAIANLQQTEDASARYYAAWWIGRFRAAQPETIAALLVALEDETDRSPDGGYPLRRNAAKALGKLGDRQVVPALIKALECEDYYVRESAAQALEGLGDARAMAPLMAKLTGGLAAAQLVEGKPHLAQPYEAIIEALGTLQAVESIGLIEPFLEHFSPKVQYAAARALFQLTGDNRYGDLLITALGGTDLQLRRSAMMDLGATGYLPGAQAIAKAFAENSLKLIALRDLWATHRQRQASSESKALSPASRQILELMDSLL.

It belongs to the CpcE/RpcE/PecE family. CpcE and CpcF associate to form a lyase.

Its function is as follows. Required for the chromophorylation of the CpcA gene product. The chain is Phycocyanobilin lyase subunit alpha (cpcE) from Synechocystis sp. (strain ATCC 27184 / PCC 6803 / Kazusa).